An 80-amino-acid polypeptide reads, in one-letter code: Exodeoxyribonuclease 7 small subunit (80 aa).

The protein belongs to the XseB family. Heterooligomer composed of large and small subunits.

It localises to the cytoplasm. The catalysed reaction is Exonucleolytic cleavage in either 5'- to 3'- or 3'- to 5'-direction to yield nucleoside 5'-phosphates.. Bidirectionally degrades single-stranded DNA into large acid-insoluble oligonucleotides, which are then degraded further into small acid-soluble oligonucleotides. The chain is Exodeoxyribonuclease 7 small subunit from Citrobacter koseri (strain ATCC BAA-895 / CDC 4225-83 / SGSC4696).